The following is a 1860-amino-acid chain: Probable helicase with zinc finger domain (1860 aa).

The C3H1-type zinc finger occupies 168-196; the sequence is SEEYTLCKRFLEQGLCRYGAQCTSAHSQE. 661–668 provides a ligand contact to ATP; the sequence is GPYGTGKT. Residues 787 to 790 carry the DEAA box motif; sequence DEAA. Disordered regions lie at residues 1106 to 1136, 1158 to 1177, 1286 to 1317, 1556 to 1604, 1641 to 1709, and 1749 to 1860; these read RSQH…TEPF, TPPG…VQRL, ERKA…GFPA, IQPR…PPDH, RQDP…RYPS, and MSEE…TYFK. Positions 1107-1116 are enriched in low complexity; the sequence is SQHPPQQGPG. The span at 1286–1298 shows a compositional bias: basic and acidic residues; it reads ERKAPELKEKQGD. The segment covering 1301 to 1313 has biased composition (polar residues); it reads SVQNKSPEPQSNM. The span at 1641-1660 shows a compositional bias: low complexity; the sequence is RQDPGPLQHQQQKQQLQAPQ. 2 stretches are compositionally biased toward pro residues: residues 1760–1769 and 1783–1794; these read QPPPPPPPHP and PLLPSKQTPPDP. The segment covering 1847–1860 has biased composition (low complexity); it reads GSSNSSNGYYTYFK.

This sequence belongs to the DNA2/NAM7 helicase family.

It is found in the nucleus. May act as a helicase. This Danio rerio (Zebrafish) protein is Probable helicase with zinc finger domain (helz).